Reading from the N-terminus, the 590-residue chain is Cytosolic Fe-S cluster assembly factor nar1 (590 aa).

8 residues coordinate [4Fe-4S] cluster: C20, C62, C65, C68, C214, C269, C456, and C460.

It belongs to the NARF family.

Functionally, component of the cytosolic Fe/S protein assembly machinery. Required for maturation of extramitochondrial Fe/S proteins. May play a role in the transfer of pre-assembled Fe/S clusters to target apoproteins. The sequence is that of Cytosolic Fe-S cluster assembly factor nar1 (nar1) from Talaromyces marneffei (strain ATCC 18224 / CBS 334.59 / QM 7333) (Penicillium marneffei).